The following is a 166-amino-acid chain: Disulfide bond formation protein B (166 aa).

Residues 1–11 lie on the Cytoplasmic side of the membrane; that stretch reads MIALPRNRRPL. Residues 12 to 28 form a helical membrane-spanning segment; sequence FLAVFAYCAALLAFGLY. Residues 29–46 lie on the Periplasmic side of the membrane; that stretch reads LQHYQGIEPCPMCIMQRY. A disulfide bond links Cys38 and Cys41. The helical transmembrane segment at 47–63 threads the bilayer; sequence AFALVGVIALVAGLHGP. The Cytoplasmic portion of the chain corresponds to 64-70; it reads RGAGVRV. The helical transmembrane segment at 71 to 87 threads the bilayer; that stretch reads YGGLLLLTALAGGSVAA. Over 88–143 the chain is Periplasmic; it reads RQTWMQLYPPEIPECGPGLEYMLESFPLTSALPMIFRGAGDCSAIDWTFLGLSLAN. Cys102 and Cys129 are joined by a disulfide. The chain crosses the membrane as a helical span at residues 144-162; the sequence is WSLLNFGAAALLALWLLFG. Over 163-166 the chain is Cytoplasmic; the sequence is RRVR.

Belongs to the DsbB family.

Its subcellular location is the cell inner membrane. Functionally, required for disulfide bond formation in some periplasmic proteins. Acts by oxidizing the DsbA protein. The chain is Disulfide bond formation protein B from Azoarcus sp. (strain BH72).